The sequence spans 321 residues: ATP-dependent 6-phosphofructokinase (321 aa).

Gly-11 contributes to the ATP binding site. 21–25 (RAVVR) is an ADP binding site. ATP-binding positions include 72–73 (RC) and 102–105 (GDGS). Asp-103 is a binding site for Mg(2+). Position 126–128 (126–128 (TID)) interacts with substrate. Residue Asp-128 is the Proton acceptor of the active site. Arg-155 lines the ADP pocket. Residues Arg-163 and 170–172 (MGR) contribute to the substrate site. Residues 186-188 (GAE), Arg-212, and 214-216 (KLH) each bind ADP. Substrate is bound by residues Glu-223, Arg-245, and 251-254 (HIQR).

It belongs to the phosphofructokinase type A (PFKA) family. ATP-dependent PFK group I subfamily. Prokaryotic clade 'B1' sub-subfamily. In terms of assembly, homotetramer. Mg(2+) is required as a cofactor.

The protein resides in the cytoplasm. It catalyses the reaction beta-D-fructose 6-phosphate + ATP = beta-D-fructose 1,6-bisphosphate + ADP + H(+). Its pathway is carbohydrate degradation; glycolysis; D-glyceraldehyde 3-phosphate and glycerone phosphate from D-glucose: step 3/4. Allosterically activated by ADP and other diphosphonucleosides, and allosterically inhibited by phosphoenolpyruvate. In terms of biological role, catalyzes the phosphorylation of D-fructose 6-phosphate to fructose 1,6-bisphosphate by ATP, the first committing step of glycolysis. The protein is ATP-dependent 6-phosphofructokinase of Caldanaerobacter subterraneus subsp. tengcongensis (strain DSM 15242 / JCM 11007 / NBRC 100824 / MB4) (Thermoanaerobacter tengcongensis).